The primary structure comprises 508 residues: Lysine-specific permease LysP (508 aa).

Helical transmembrane passes span 43 to 63, 66 to 86, 112 to 132, 144 to 164, 184 to 204, 219 to 239, 270 to 290, 314 to 334, 367 to 387, 393 to 413, 436 to 456, and 467 to 487; these read SMIA…GDVI, AGPF…YFLM, PAFG…TVAV, WLPD…VFSI, ITVV…IMGG, FVGG…LLVA, IFWR…AIIP, VGFS…VVSA, IPFI…LTSI, FTLL…GIAI, AKLF…VTLG, and WVQG…YLGY.

This sequence belongs to the amino acid-polyamine-organocation (APC) superfamily. Amino acid transporter (AAT) (TC 2.A.3.1) family.

It is found in the cell membrane. The catalysed reaction is L-lysine(out) + H(+)(out) = L-lysine(in) + H(+)(in). Its function is as follows. Permease involved in lysine uptake. The polypeptide is Lysine-specific permease LysP (Lactococcus lactis subsp. cremoris (strain MG1363)).